We begin with the raw amino-acid sequence, 661 residues long: Fusaric acid cluster transcription factor FUB12 (661 aa).

A DNA-binding region (zn(2)-C6 fungal-type) is located at residues 17-48; it reads CVPCRTRKIKCNAAVVGLPCGSCVSRECPDEC. Disordered regions lie at residues 57–131 and 151–185; these read TVKG…RPPG and SAAQ…QLDD. The segment covering 73–98 has biased composition (polar residues); the sequence is PDTNGSILSPRQQQLPTNVSRQTTDS. Basic and acidic residues predominate over residues 99–109; the sequence is SHSDPVEESIH. Polar residues predominate over residues 110-119; that stretch reads ASHTGSSLRN. A compositionally biased stretch (basic and acidic residues) spans 120–129; sequence DTPHSRDRRP.

The protein localises to the nucleus. Functionally, transcription factor that is involved in the formation of the two Fusaric acid derivatives, dehydrofusaric acid and fusarinolic acid, serving as a detoxification mechanism. The chain is Fusaric acid cluster transcription factor FUB12 from Gibberella fujikuroi (strain CBS 195.34 / IMI 58289 / NRRL A-6831) (Bakanae and foot rot disease fungus).